Consider the following 214-residue polypeptide: Probable nicotinate-nucleotide adenylyltransferase (214 aa).

The protein belongs to the NadD family.

The catalysed reaction is nicotinate beta-D-ribonucleotide + ATP + H(+) = deamido-NAD(+) + diphosphate. It participates in cofactor biosynthesis; NAD(+) biosynthesis; deamido-NAD(+) from nicotinate D-ribonucleotide: step 1/1. Functionally, catalyzes the reversible adenylation of nicotinate mononucleotide (NaMN) to nicotinic acid adenine dinucleotide (NaAD). This Psychromonas ingrahamii (strain DSM 17664 / CCUG 51855 / 37) protein is Probable nicotinate-nucleotide adenylyltransferase.